The chain runs to 313 residues: MPTPKAFALLGPTAGGKTALALKIAETLPVEIISLDSALVYRDMDIGTAKPSASERAFVPHHLIDIIPPTESYSAARFVEDCTRLVGEISSRGRFALIVGGTMMYFRALTQGLNDLPEADACLRADLDEQKQMYGLDFLYRTLQKVDPETACRLKPNDSQRIGRALEVYYLTGKPMSTHLGSLTSHTLPFDLHTAALIPENRARLHENIALRFHLMLEQGFIGEVENLRRRYPGLTAYSPAIRCVGYRQAWKYLDGKTDFPAFVEKGIAATRQLAKRQLTWLRKTPLDCVADPFSDCTSCTRLIEAAKRFFGA.

11–18 (GPTAGGKT) is an ATP binding site. 13–18 (TAGGKT) lines the substrate pocket. 3 interaction with substrate tRNA regions span residues 36–39 (DSAL), 160–164 (QRIGR), and 243–248 (RCVGYR).

It belongs to the IPP transferase family. Monomer. The cofactor is Mg(2+).

It catalyses the reaction adenosine(37) in tRNA + dimethylallyl diphosphate = N(6)-dimethylallyladenosine(37) in tRNA + diphosphate. Catalyzes the transfer of a dimethylallyl group onto the adenine at position 37 in tRNAs that read codons beginning with uridine, leading to the formation of N6-(dimethylallyl)adenosine (i(6)A). The chain is tRNA dimethylallyltransferase from Neisseria meningitidis serogroup B (strain ATCC BAA-335 / MC58).